A 329-amino-acid polypeptide reads, in one-letter code: 4-hydroxythreonine-4-phosphate dehydrogenase (329 aa).

Substrate contacts are provided by histidine 137 and threonine 138. 3 residues coordinate a divalent metal cation: histidine 167, histidine 212, and histidine 267. 3 residues coordinate substrate: lysine 275, asparagine 284, and arginine 293.

The protein belongs to the PdxA family. In terms of assembly, homodimer. Zn(2+) serves as cofactor. Requires Mg(2+) as cofactor. Co(2+) is required as a cofactor.

The protein localises to the cytoplasm. The enzyme catalyses 4-(phosphooxy)-L-threonine + NAD(+) = 3-amino-2-oxopropyl phosphate + CO2 + NADH. It functions in the pathway cofactor biosynthesis; pyridoxine 5'-phosphate biosynthesis; pyridoxine 5'-phosphate from D-erythrose 4-phosphate: step 4/5. Catalyzes the NAD(P)-dependent oxidation of 4-(phosphooxy)-L-threonine (HTP) into 2-amino-3-oxo-4-(phosphooxy)butyric acid which spontaneously decarboxylates to form 3-amino-2-oxopropyl phosphate (AHAP). This chain is 4-hydroxythreonine-4-phosphate dehydrogenase, found in Stutzerimonas stutzeri (strain A1501) (Pseudomonas stutzeri).